Here is a 618-residue protein sequence, read N- to C-terminus: 1-deoxy-D-xylulose-5-phosphate synthase (618 aa).

Residues His-76 and 117-119 (GHS) contribute to the thiamine diphosphate site. Asp-148 provides a ligand contact to Mg(2+). Residues 149–150 (GA), Asn-177, Tyr-284, and Glu-366 each bind thiamine diphosphate. Asn-177 is a binding site for Mg(2+).

Belongs to the transketolase family. DXPS subfamily. In terms of assembly, homodimer. Requires Mg(2+) as cofactor. The cofactor is thiamine diphosphate.

The enzyme catalyses D-glyceraldehyde 3-phosphate + pyruvate + H(+) = 1-deoxy-D-xylulose 5-phosphate + CO2. It participates in metabolic intermediate biosynthesis; 1-deoxy-D-xylulose 5-phosphate biosynthesis; 1-deoxy-D-xylulose 5-phosphate from D-glyceraldehyde 3-phosphate and pyruvate: step 1/1. Its function is as follows. Catalyzes the acyloin condensation reaction between C atoms 2 and 3 of pyruvate and glyceraldehyde 3-phosphate to yield 1-deoxy-D-xylulose-5-phosphate (DXP). The sequence is that of 1-deoxy-D-xylulose-5-phosphate synthase from Dechloromonas aromatica (strain RCB).